The following is a 363-amino-acid chain: Cobalt-precorrin-5B C(1)-methyltransferase (363 aa).

The protein belongs to the CbiD family.

The catalysed reaction is Co-precorrin-5B + S-adenosyl-L-methionine = Co-precorrin-6A + S-adenosyl-L-homocysteine. It functions in the pathway cofactor biosynthesis; adenosylcobalamin biosynthesis; cob(II)yrinate a,c-diamide from sirohydrochlorin (anaerobic route): step 6/10. Catalyzes the methylation of C-1 in cobalt-precorrin-5B to form cobalt-precorrin-6A. This is Cobalt-precorrin-5B C(1)-methyltransferase from Burkholderia mallei (strain ATCC 23344).